Here is an 819-residue protein sequence, read N- to C-terminus: Zinc finger protein 27 (819 aa).

A KRAB domain is found at 1–75; sequence MDVTIDFSRE…KTLGAESCHD (75 aa). The segment at 93-123 is disordered; it reads PKRPRHWDPPEDEPKHSSDLQTHDESNGLKR. Positions 98–120 are enriched in basic and acidic residues; it reads HWDPPEDEPKHSSDLQTHDESNG. 21 consecutive C2H2-type zinc fingers follow at residues 205 to 227, 233 to 255, 261 to 283, 289 to 311, 317 to 339, 345 to 367, 401 to 423, 429 to 451, 457 to 479, 485 to 507, 513 to 535, 541 to 563, 569 to 591, 597 to 619, 625 to 647, 653 to 675, 681 to 703, 709 to 731, 737 to 759, 765 to 787, and 793 to 815; these read YVCV…QKTH, YKCG…RRIH, YDCS…QKIH, HGCV…QKIH, YVCI…RRIH, YACD…QRIH, SICA…QRTH, YQCG…RRIH, YVCV…QVIH, YQCG…KRIH, YVCS…QKTH, YVCA…QRIH, YGCS…EKIH, YGCR…QKIH, HVCA…QRIH, YGCT…RPIH, YVCA…QKTH, YACS…HRIH, YDCG…QRIH, YRCA…QTTH, and YKCV…ENVH.

Belongs to the krueppel C2H2-type zinc-finger protein family.

It is found in the nucleus. Its function is as follows. May be involved in transcriptional regulation. The polypeptide is Zinc finger protein 27 (Zfp27) (Mus musculus (Mouse)).